Here is a 168-residue protein sequence, read N- to C-terminus: Small ribosomal subunit protein uS8 (168 aa).

The segment at 59–93 is not found in other S8 sequences; that stretch reads EEFKKMKELAEKSPNPKMRRYLQQLIDYNKGTQYP.

It belongs to the universal ribosomal protein uS8 family. Part of the 30S ribosomal subunit. Contacts proteins S5 and S12.

Its function is as follows. One of the primary rRNA binding proteins, it binds directly to 16S rRNA central domain where it helps coordinate assembly of the platform of the 30S subunit. The chain is Small ribosomal subunit protein uS8 from Aquifex pyrophilus.